The primary structure comprises 366 residues: Alanine racemase (366 aa).

K35 (proton acceptor; specific for D-alanine) is an active-site residue. Residue K35 is modified to N6-(pyridoxal phosphate)lysine. R130 provides a ligand contact to substrate. The active-site Proton acceptor; specific for L-alanine is the Y254. M302 provides a ligand contact to substrate.

The protein belongs to the alanine racemase family. It depends on pyridoxal 5'-phosphate as a cofactor.

It catalyses the reaction L-alanine = D-alanine. Its pathway is amino-acid biosynthesis; D-alanine biosynthesis; D-alanine from L-alanine: step 1/1. Catalyzes the interconversion of L-alanine and D-alanine. May also act on other amino acids. The chain is Alanine racemase (alr) from Variovorax paradoxus (strain S110).